Reading from the N-terminus, the 680-residue chain is Anosmin-1 (680 aa).

A signal peptide spans 1-24; sequence MVPGVPGAVLTLCLWLAASSGCLA. 5 disulfides stabilise this stretch: Cys-49–Cys-83, Cys-53–Cys-77, Cys-86–Cys-105, Cys-90–Cys-101, and Cys-116–Cys-120. N-linked (GlcNAc...) asparagine glycosylation occurs at Asn-71. The WAP domain occupies 127 to 176; that stretch reads LLVKQGDCPAPEKASGFAAACVESCEVDNECSGVKKCCSNGCGHTCQVPK. Fibronectin type-III domains lie at 186–287, 292–400, 425–523, and 550–658; these read PRKE…SKDP, APAN…THAT, PTRP…TPPC, and KPEN…LPPS. Residues Asn-209, Asn-300, Asn-470, Asn-553, and Asn-564 are each glycosylated (N-linked (GlcNAc...) asparagine). Residues 642–680 are disordered; it reads EGPATIKTFRTPELPPSSAHRSHLKHRHPHHYKPSPERY. Residues 661-674 are compositionally biased toward basic residues; it reads HRSHLKHRHPHHYK.

Interacts with FGFR1; this interaction does not interfere with FGF2-binding to FGFR1. Binds heparin. Heparin may promote or interfere with ANOS1-FGFR1-FGF2 complex formation depending on the sequential order of its binding to the various constituents. For instance, heparin-ANOS1 interaction favors subsequent binding to pre-existing binary FGFR1-FGF2 complex, while heparin-FGF2 complex does not interact with ANOS1-FGFR1. N-glycosylated. In terms of processing, may be proteolytically cleaved at the cell surface and released from the cell surface. Expressed in the cerebellum (at protein level).

It is found in the cell membrane. The protein localises to the secreted. Its function is as follows. Has a dual branch-promoting and guidance activity, which may play an important role in the patterning of mitral and tufted cell collaterals to the olfactory cortex. Chemoattractant for fetal olfactory epithelial cells. The protein is Anosmin-1 of Homo sapiens (Human).